The sequence spans 90 residues: Small ribosomal subunit protein bS20 (90 aa).

It belongs to the bacterial ribosomal protein bS20 family.

Functionally, binds directly to 16S ribosomal RNA. This Francisella tularensis subsp. tularensis (strain FSC 198) protein is Small ribosomal subunit protein bS20.